The sequence spans 61 residues: Tubulin alpha-4 chain (61 aa).

Gln-11 lines the GTP pocket. Residues 35–61 (QMPGDKTIGGGDAEFDEGEDGDEGDEY) form a disordered region. Residue Lys-40 is modified to N6-acetyllysine. The segment covering 47–61 (AEFDEGEDGDEGDEY) has biased composition (acidic residues).

The protein belongs to the tubulin family. Dimer of alpha and beta chains. A typical microtubule is a hollow water-filled tube with an outer diameter of 25 nm and an inner diameter of 15 nM. Alpha-beta heterodimers associate head-to-tail to form protofilaments running lengthwise along the microtubule wall with the beta-tubulin subunit facing the microtubule plus end conferring a structural polarity. Microtubules usually have 13 protofilaments but different protofilament numbers can be found in some organisms and specialized cells. It depends on Mg(2+) as a cofactor. Post-translationally, undergoes a tyrosination/detyrosination cycle, the cyclic removal and re-addition of a C-terminal tyrosine residue by the enzymes tubulin tyrosine carboxypeptidase (TTCP) and tubulin tyrosine ligase (TTL), respectively. Acetylation of alpha chains at Lys-40 stabilizes microtubules and affects affinity and processivity of microtubule motors. This modification has a role in multiple cellular functions, ranging from cell motility, cell cycle progression or cell differentiation to intracellular trafficking and signaling.

The protein resides in the cytoplasm. It is found in the cytoskeleton. The enzyme catalyses GTP + H2O = GDP + phosphate + H(+). In terms of biological role, tubulin is the major constituent of microtubules, a cylinder consisting of laterally associated linear protofilaments composed of alpha- and beta-tubulin heterodimers. Microtubules grow by the addition of GTP-tubulin dimers to the microtubule end, where a stabilizing cap forms. Below the cap, tubulin dimers are in GDP-bound state, owing to GTPase activity of alpha-tubulin. This is Tubulin alpha-4 chain (TUBA4) from Zea mays (Maize).